We begin with the raw amino-acid sequence, 242 residues long: Probable transcriptional regulatory protein Bcep18194_A5621 (242 aa).

It belongs to the TACO1 family.

Its subcellular location is the cytoplasm. The chain is Probable transcriptional regulatory protein Bcep18194_A5621 from Burkholderia lata (strain ATCC 17760 / DSM 23089 / LMG 22485 / NCIMB 9086 / R18194 / 383).